Consider the following 356-residue polypeptide: Delta(7)-sterol 5(6)-desaturase (356 aa).

The next 3 membrane-spanning stretches (helical) occupy residues 87–107, 134–154, and 171–191; these read LTLY…FAGL, QANI…LAEV, and WYDY…IYWI. The 125-residue stretch at 179-303 folds into the Fatty acid hydroxylase domain; sequence FFIAFTDLCI…FTTLWDRLGG (125 aa). The short motif at 192–196 is the Histidine box-1 element; it reads HRGLH. The short motif at 205–209 is the Histidine box-2 element; that stretch reads HKPHH. The chain crosses the membrane as a helical span at residues 235–255; the sequence is YIFPFLFPLSKIASVAFFVFV. The Histidine box-3 motif lies at 280–284; the sequence is HTMHH.

Belongs to the sterol desaturase family. Fe cation serves as cofactor.

The protein resides in the endoplasmic reticulum membrane. The enzyme catalyses a Delta(7)-sterol + 2 Fe(II)-[cytochrome b5] + O2 + 2 H(+) = a Delta(5),Delta(7)-sterol + 2 Fe(III)-[cytochrome b5] + 2 H2O. The protein operates within steroid metabolism; ergosterol biosynthesis; ergosterol from zymosterol: step 3/5. Functionally, catalyzes the introduction of a C-5 double bond in the B ring of ergosterol. May contribute to the regulation of ergosterol biosynthesis. The sequence is that of Delta(7)-sterol 5(6)-desaturase (ERG3) from Leptosphaeria maculans (Blackleg fungus).